The sequence spans 483 residues: Protein PLASTID TRANSCRIPTIONALLY ACTIVE 14 (483 aa).

The N-terminal 62 residues, 1 to 62, are a transit peptide targeting the chloroplast; sequence MASSVSLQFL…TQPFPLFQSP (62 aa). Positions 80-325 constitute an SET domain; it reads YKIGYVRSVR…KGEEMTINYM (246 aa). Y324 is an S-adenosyl-L-methionine binding site.

The protein belongs to the class V-like SAM-binding methyltransferase superfamily. Component of the transcriptionally active chromosome (TAC) complexes. Interacts with PTAC12/HMR/PAP5 and PTAC7. Binds to SL1/MTERF3. In terms of tissue distribution, mostly expressed in leaves, flowers and seedlings, and, to a lower extent, in stems and roots.

The protein resides in the plastid. It localises to the chloroplast thylakoid. In terms of biological role, essential for chloroplast development, especially for thylakoid formation. Involved in plastid gene expression, probably by maintaining plastid-encoded RNA polymerase (PEP) activity. The chain is Protein PLASTID TRANSCRIPTIONALLY ACTIVE 14 from Arabidopsis thaliana (Mouse-ear cress).